The primary structure comprises 802 residues: Ribosomal protein S6 kinase alpha-5 (802 aa).

The segment covering 1-22 (MEEEGGSSGGAAGTSADGGDGG) has biased composition (gly residues). The disordered stretch occupies residues 1-23 (MEEEGGSSGGAAGTSADGGDGGE). The Protein kinase 1 domain occupies 49-318 (FELLKVLGTG…ADEIKEHLFF (270 aa)). Residues 55–63 (LGTGAYGKV) and Lys-81 contribute to the ATP site. The Proton acceptor role is filled by Asp-177. Ser-212 is modified (phosphoserine; by autocatalysis). The region spanning 319–387 (QKINWDDLAA…VAPSILFKRN (69 aa)) is the AGC-kinase C-terminal domain. Position 360 is a phosphoserine; by MAPK1, MAPK3 and MAPK14 (Ser-360). Phosphoserine; by autocatalysis occurs at positions 376 and 381. One can recognise a Protein kinase 2 domain in the interval 426 to 687 (DLKDKPLGEG…MSGLRYNEWL (262 aa)). ATP contacts are provided by residues 432–440 (LGEGSFSIC) and Lys-455. The Proton acceptor role is filled by Asp-544. Residue Thr-581 is modified to Phosphothreonine; by MAPK1, MAPK3 and MAPK14. Residues Ser-647, Ser-657, Ser-691, and Ser-695 each carry the phosphoserine modification. Thr-700 is modified (phosphothreonine; by MAPK1, MAPK3 and MAPK14). Residues 741-802 (AKRRKMKKTS…TLFQFSDSVA (62 aa)) form a disordered region. Low complexity predominate over residues 749–779 (TSTSTETRSSSSESSHSSSSHSHGKTTPTKT). Phosphoserine; by autocatalysis is present on residues Ser-750, Ser-752, and Ser-758. A compositionally biased stretch (polar residues) spans 780–802 (LQPSNPADSNNPETLFQFSDSVA). A Phosphoserine modification is found at Ser-798.

Belongs to the protein kinase superfamily. AGC Ser/Thr protein kinase family. S6 kinase subfamily. As to quaternary structure, forms a complex with either MAPK1/ERK2 or MAPK3/ERK1 in quiescent cells which transiently dissociates following mitogenic stimulation. Also associates with MAPK14/p38-alpha. Activated RPS6KA5 associates with and phosphorylates the NF-kappa-B p65 subunit RELA. Interacts with CREBBP and EP300. Requires Mg(2+) as cofactor. In terms of processing, ser-376 and Thr-581 phosphorylation is required for kinase activity. Ser-376 and Ser-212 are autophosphorylated by the C-terminal kinase domain, and their phosphorylation is essential for the catalytic activity of the N-terminal kinase domain. Phosphorylated at Ser-360, Thr-581 and Thr-700 by MAPK1/ERK2, MAPK3/ERK1 and MAPK14/p38-alpha. Autophosphorylated at Ser-750, Ser-752 and Ser-758 by the N-terminal kinase domain. Ubiquitinated. In terms of tissue distribution, widely expressed with high levels in heart, brain and placenta. Less abundant in lung, kidney and liver.

It is found in the nucleus. The protein localises to the cytoplasm. The enzyme catalyses L-seryl-[protein] + ATP = O-phospho-L-seryl-[protein] + ADP + H(+). The catalysed reaction is L-threonyl-[protein] + ATP = O-phospho-L-threonyl-[protein] + ADP + H(+). Its activity is regulated as follows. Activated by phosphorylation at Ser-360, Thr-581 and Thr-700 by MAPK1/ERK2, MAPK3/ERK1 and MAPK14/p38-alpha, and by further autophosphorylation of Ser-212, Ser-376 and Ser-381 by the activated C-terminal kinase domain. The active N-terminal kinase domain finally phosphorylates downstream substrates, as well as Ser-750, Ser-752 and Ser-758 in its own C-terminal region. Serine/threonine-protein kinase that is required for the mitogen or stress-induced phosphorylation of the transcription factors CREB1 and ATF1 and for the regulation of the transcription factors RELA, STAT3 and ETV1/ER81, and that contributes to gene activation by histone phosphorylation and functions in the regulation of inflammatory genes. Phosphorylates CREB1 and ATF1 in response to mitogenic or stress stimuli such as UV-C irradiation, epidermal growth factor (EGF) and anisomycin. Plays an essential role in the control of RELA transcriptional activity in response to TNF and upon glucocorticoid, associates in the cytoplasm with the glucocorticoid receptor NR3C1 and contributes to RELA inhibition and repression of inflammatory gene expression. In skeletal myoblasts is required for phosphorylation of RELA at 'Ser-276' during oxidative stress. In erythropoietin-stimulated cells, is necessary for the 'Ser-727' phosphorylation of STAT3 and regulation of its transcriptional potential. Phosphorylates ETV1/ER81 at 'Ser-191' and 'Ser-216', and thereby regulates its ability to stimulate transcription, which may be important during development and breast tumor formation. Directly represses transcription via phosphorylation of 'Ser-1' of histone H2A. Phosphorylates 'Ser-10' of histone H3 in response to mitogenics, stress stimuli and EGF, which results in the transcriptional activation of several immediate early genes, including proto-oncogenes c-fos/FOS and c-jun/JUN. May also phosphorylate 'Ser-28' of histone H3. Mediates the mitogen- and stress-induced phosphorylation of high mobility group protein 1 (HMGN1/HMG14). In lipopolysaccharide-stimulated primary macrophages, acts downstream of the Toll-like receptor TLR4 to limit the production of pro-inflammatory cytokines. Functions probably by inducing transcription of the MAP kinase phosphatase DUSP1 and the anti-inflammatory cytokine interleukin 10 (IL10), via CREB1 and ATF1 transcription factors. Plays a role in neuronal cell death by mediating the downstream effects of excitotoxic injury. Phosphorylates TRIM7 at 'Ser-107' in response to growth factor signaling via the MEK/ERK pathway, thereby stimulating its ubiquitin ligase activity. This is Ribosomal protein S6 kinase alpha-5 (RPS6KA5) from Homo sapiens (Human).